We begin with the raw amino-acid sequence, 416 residues long: Serine hydroxymethyltransferase (416 aa).

(6S)-5,6,7,8-tetrahydrofolate-binding positions include leucine 118 and glycine 122–leucine 124. An N6-(pyridoxal phosphate)lysine modification is found at lysine 226. Glutamate 242 lines the (6S)-5,6,7,8-tetrahydrofolate pocket.

It belongs to the SHMT family. As to quaternary structure, homodimer. Requires pyridoxal 5'-phosphate as cofactor.

The protein resides in the cytoplasm. It catalyses the reaction (6R)-5,10-methylene-5,6,7,8-tetrahydrofolate + glycine + H2O = (6S)-5,6,7,8-tetrahydrofolate + L-serine. The protein operates within one-carbon metabolism; tetrahydrofolate interconversion. It participates in amino-acid biosynthesis; glycine biosynthesis; glycine from L-serine: step 1/1. Catalyzes the reversible interconversion of serine and glycine with tetrahydrofolate (THF) serving as the one-carbon carrier. This reaction serves as the major source of one-carbon groups required for the biosynthesis of purines, thymidylate, methionine, and other important biomolecules. Also exhibits THF-independent aldolase activity toward beta-hydroxyamino acids, producing glycine and aldehydes, via a retro-aldol mechanism. In Helicobacter pylori (strain J99 / ATCC 700824) (Campylobacter pylori J99), this protein is Serine hydroxymethyltransferase.